The chain runs to 367 residues: MSFAPEPSFSHGKPPAASCATAILLCNLGTPDAPTAPALRRYLAEFLSDPRVVEIPRPIWWLILHGIILRLRPKKSATKYASIWTPEGSPLKVWTQKQALMLRGYLGARGHTVEVRYAMRYGNPSIASQLNQLKADGATRILILPAYPQYSGTTTASVFDAVYSWAARVRRIPEFRFVNNYHDDPGYISALAERVRTHWRHYGQAGQLVMSFHGVPERTLKLGDPYHCECHKTARLLAEKLGLGKDRYKVTFQSRFGKAKWLEPYTEPTLIRMAQAGIERVDVVCPGFTGDCLETLEEIAMEARHAFLKAGGKEFHYIECLNDSPTWIAALAEFSARQLAGWPTQAPRDTEALRKSGERALAMGAPR.

2 residues coordinate Fe cation: H213 and E294.

Belongs to the ferrochelatase family.

It localises to the cytoplasm. The enzyme catalyses heme b + 2 H(+) = protoporphyrin IX + Fe(2+). Its pathway is porphyrin-containing compound metabolism; protoheme biosynthesis; protoheme from protoporphyrin-IX: step 1/1. Functionally, catalyzes the ferrous insertion into protoporphyrin IX. The chain is Ferrochelatase from Polaromonas sp. (strain JS666 / ATCC BAA-500).